The primary structure comprises 360 residues: UPF0324 membrane protein plu2856 (360 aa).

The next 9 membrane-spanning stretches (helical) occupy residues Leu-20–Trp-42, Gly-47–Leu-69, Val-104–Leu-126, Gln-136–Ala-155, Val-167–Tyr-189, Met-239–Ile-256, Trp-277–Val-299, Asn-304–Ile-326, and Pro-333–Ile-355.

This sequence belongs to the UPF0324 family.

Its subcellular location is the cell membrane. This Photorhabdus laumondii subsp. laumondii (strain DSM 15139 / CIP 105565 / TT01) (Photorhabdus luminescens subsp. laumondii) protein is UPF0324 membrane protein plu2856.